The chain runs to 485 residues: Glutamyl-tRNA(Gln) amidotransferase subunit A (485 aa).

Active-site charge relay system residues include K79 and S154. The active-site Acyl-ester intermediate is the S178.

The protein belongs to the amidase family. GatA subfamily. In terms of assembly, heterotrimer of A, B and C subunits.

The catalysed reaction is L-glutamyl-tRNA(Gln) + L-glutamine + ATP + H2O = L-glutaminyl-tRNA(Gln) + L-glutamate + ADP + phosphate + H(+). Its function is as follows. Allows the formation of correctly charged Gln-tRNA(Gln) through the transamidation of misacylated Glu-tRNA(Gln) in organisms which lack glutaminyl-tRNA synthetase. The reaction takes place in the presence of glutamine and ATP through an activated gamma-phospho-Glu-tRNA(Gln). The polypeptide is Glutamyl-tRNA(Gln) amidotransferase subunit A (Staphylococcus haemolyticus (strain JCSC1435)).